The sequence spans 1226 residues: MGKEVRQQLEQQLKQRILLIDGGMGTMIQSYKLQEEDYRGARFVDWHCDLKGNNDLLVLTQPQIIKEIHSAYLEAGADILETNTFNSTTIAMADYDMQSLSAEINFAAAKLAREVADEWTAKDPSRPRYVAGVLGPTNRTCSISPDVNDPGFRNVTFDGLVEAYSESTRALIKGGSDLILIETIFDTLNAKACAFAVDSVFEELGISLPVMISGTITDASGRTLSGQTTEAFYNALRHVRPISFGLNCALGPDELRQYVEELSRISECYVSAHPNAGLPNAFGEYDLSAEEMAEHIAEWAQAGFLNLVGGCCGTTPEHIAAIAKAVEGVKPRALPDLKVECRLSGLEPLNIGPETLFVNVGERTNVTGSARFKRLIKEEQYDEALDVAREQVENGAQIIDINMDEGMLDAEACMVRFLNLCASEPEISKVPVMVDSSKWEVIEAGLKCIQGKGIVNSISLKEGKEKFIAQAKLVRRYGAAVIVMAFDEVGQADTRERKLEICRRAYHILVDEVGFPPEDIIFDPNIFAVATGIDEHNNYALDFINAVADIKRELPHAMISGGVSNVSFSFRGNNYVREAIHAVFLYHCFKHGMDMGIVNAGQLEIYDNVPLKLREAVEDVILNRRSDGTERLLEIAEAYRENSVGKEEDASALEWRAWPVAKRLEHALVKGITEFIVQDTEEARQQASKPLEVIEGPLMDGMNVVGDLFGEGKMFLPQVVKSARVMKQAVAYLEPFINAQKSGSTSNGKILLATVKGDVHDIGKNIVGVVLQCNNFEIIDLGVMVPCEQILKVAREQNVDIIGLSGLITPSLDEMVHVAKEMERQGFELPLLIGGATTSKAHTAVKIEQNYHAPVVYVNNASRAVGVCTSLLSDEQRPGFIERLDLDYERTRDQHARKTPKSRPVTLEQARANKAALDWANYTPPAPAKPGVHVFENIALATLRPYIDWTPFFMTWSLMGKYPAILEHEEVGEEAKRLFHDANALLDKVEREGLLKASGMCALFPAASVGDDIEVYSDESRTQVAHVLYNLRQQTEKPKGANYCLSDYVAPKESGKRDWIGAFAVTGGIGERALADAYKAQGDDYNAIMIQAVADRLAEAFAEYLHEKVRKEIWGYASDENLSNDDLIRERYQGIRPAPGYPACPEHTEKATLWQMLNVEETIGMSLTTSYAMWPGASVSGWYFSHPDSRYFAVAQIQPDQLHSYAERKGWRLEEAEKWLAPNLDA.

The Hcy-binding domain occupies 6–326 (RQQLEQQLKQ…EHIAAIAKAV (321 aa)). Zn(2+)-binding residues include Cys-248, Cys-311, and Cys-312. Residues 357 to 618 (FVNVGERTNV…VPLKLREAVE (262 aa)) form the Pterin-binding domain. In terms of domain architecture, B12-binding N-terminal spans 651-745 (SALEWRAWPV…FINAQKSGST (95 aa)). Methylcob(III)alamin is bound by residues Glu-695, 757–761 (GDVHD), His-760, Ser-805, Thr-809, and Ala-861. A B12-binding domain is found at 747–882 (NGKILLATVK…SDEQRPGFIE (136 aa)). The 329-residue stretch at 898–1226 (KTPKSRPVTL…EKWLAPNLDA (329 aa)) folds into the AdoMet activation domain. S-adenosyl-L-methionine contacts are provided by residues Asp-948, Arg-1136, and 1191 to 1192 (YF).

It belongs to the vitamin-B12 dependent methionine synthase family. The cofactor is methylcob(III)alamin. Requires Zn(2+) as cofactor.

It catalyses the reaction (6S)-5-methyl-5,6,7,8-tetrahydrofolate + L-homocysteine = (6S)-5,6,7,8-tetrahydrofolate + L-methionine. It participates in amino-acid biosynthesis; L-methionine biosynthesis via de novo pathway; L-methionine from L-homocysteine (MetH route): step 1/1. Catalyzes the transfer of a methyl group from methyl-cobalamin to homocysteine, yielding enzyme-bound cob(I)alamin and methionine. Subsequently, remethylates the cofactor using methyltetrahydrofolate. The chain is Methionine synthase (metH) from Vibrio cholerae serotype O1 (strain ATCC 39315 / El Tor Inaba N16961).